The primary structure comprises 234 residues: Lipoprotein-releasing system ATP-binding protein LolD 1 (234 aa).

Positions 5 to 231 constitute an ABC transporter domain; that stretch reads IEARGIEKVF…RLTSNVRDPG (227 aa). 41–48 is an ATP binding site; it reads GASGSGKS.

It belongs to the ABC transporter superfamily. Lipoprotein translocase (TC 3.A.1.125) family. In terms of assembly, the complex is composed of two ATP-binding proteins (LolD) and two transmembrane proteins (LolC and LolE).

It localises to the cell inner membrane. Part of the ABC transporter complex LolCDE involved in the translocation of mature outer membrane-directed lipoproteins, from the inner membrane to the periplasmic chaperone, LolA. Responsible for the formation of the LolA-lipoprotein complex in an ATP-dependent manner. This chain is Lipoprotein-releasing system ATP-binding protein LolD 1, found in Caulobacter vibrioides (strain ATCC 19089 / CIP 103742 / CB 15) (Caulobacter crescentus).